Here is a 155-residue protein sequence, read N- to C-terminus: Gas vesicle protein K (155 aa).

Belongs to the gas vesicle GvpK family.

The protein resides in the gas vesicle. Its function is as follows. Might be involved in nucleating gas vesicle formation. Gas vesicles (GV) are hollow, gas filled proteinaceous nanostructures. During planktonic growth they allow positioning of the organism at a favorable depth for light or nutrient acquisition. This chain is Gas vesicle protein K, found in Dolichospermum flosaquae (Anabaena flos-aquae).